The following is a 455-amino-acid chain: Probable cytosolic iron-sulfur protein assembly protein 1 (455 aa).

WD repeat units follow at residues 31 to 70 (GHSS…TTSA), 90 to 129 (GHQR…DGSS), 163 to 202 (GHES…EFEC), 208 to 247 (EHSQ…DWFC), 253 to 292 (GHES…QCEA), 318 to 365 (YHDR…DEKS), and 380 to 453 (HASA…YAAT).

The protein belongs to the WD repeat CIA1 family.

Essential component of the cytosolic iron-sulfur (Fe/S) protein assembly machinery. Required for the maturation of extramitochondrial Fe/S proteins. This Mycosarcoma maydis (Corn smut fungus) protein is Probable cytosolic iron-sulfur protein assembly protein 1.